Reading from the N-terminus, the 183-residue chain is Abscisic acid receptor PYL10 (183 aa).

The tract at residues 20-172 is START-like; the sequence is HELVESQCSS…NLNSLADVTE (153 aa). A disulfide bridge links Cys-27 with Cys-153. Abscisate-binding positions include Lys-56, 85–90, 112–118, and Glu-137; these read ATKSTE and RLKNYSS. A Gate loop motif is present at residues 81-85; the sequence is SGLPA. The Latch loop motif lies at 111–113; the sequence is HRL.

Belongs to the PYR/PYL/RCAR abscisic acid intracellular receptor family. Monomer. Forms heterodimer with PYL13, thus antagonizing PP2Cs-binding and ABA-independent inhibition of PP2Cs. Homodimer. Binds ABA on one subunit only. Binds to CARs protein in an ABA-independent manner, both at the plasma membrane and in the nucleus. Interacts with ABI1 and HAB1, and possibly with other PP2Cs, in an ABA-independent manner.

The protein resides in the cytoplasm. It localises to the nucleus. The protein localises to the cell membrane. Functionally, receptor for abscisic acid (ABA) required for ABA-mediated responses such as stomatal closure and germination inhibition. Inhibits the activity of group-A protein phosphatases type 2C (PP2Cs) in an ABA-independent manner but more efficiently when activated by ABA. Can be activated by both (-)-ABA and (+)-ABA. This is Abscisic acid receptor PYL10 (PYL10) from Arabidopsis thaliana (Mouse-ear cress).